The sequence spans 276 residues: Short-chain dehydrogenase/reductase ATR10 (276 aa).

Isoleucine 29, serine 51, aspartate 78, and asparagine 105 together coordinate NADP(+). Serine 161 functions as the Proton donor in the catalytic mechanism. Lysine 185 and threonine 214 together coordinate NADP(+). The active-site Lowers pKa of active site Tyr is the lysine 185.

Belongs to the short-chain dehydrogenases/reductases (SDR) family.

It functions in the pathway mycotoxin biosynthesis. In terms of biological role, short-chain dehydrogenase/reductase; part of the core atranone cluster (CAC) which products are predicted to catalyze most or all steps of mycotoxin atranone synthesis, starting from geranylgeranyl pyrophosphate (GGPP). The initial cyclization of GGPP to dolabellane is probably performed by the terpene cyclase ATR13. The Baeyer-Villiger oxidation near the end of the atranone synthesis, which converts atranones D and E to atranones F and G is predicted to be catalyzed by the monooxygenase ATR8. Of the CAC's other predicted gene products, the reducing PKS ATR6 might synthesize a polyketide chain. This polyketide is probably transferred onto the atranone backbone by the polyketide transferase ATR5. Other predicted CAC products include 4 oxygenases (ATR2, ATR3, ATR4, and ATR14), 3 short-chain reductases (ATR7, ATR9, and ATR10), and a methyltransferase (ATR12). These may all be involved in the various steps of atranone biosynthesis, although their specific roles must await experimental determination. The protein is Short-chain dehydrogenase/reductase ATR10 of Stachybotrys chlorohalonatus (strain IBT 40285).